We begin with the raw amino-acid sequence, 426 residues long: Histidine--tRNA ligase (426 aa).

It belongs to the class-II aminoacyl-tRNA synthetase family. As to quaternary structure, homodimer.

The protein localises to the cytoplasm. It catalyses the reaction tRNA(His) + L-histidine + ATP = L-histidyl-tRNA(His) + AMP + diphosphate + H(+). The polypeptide is Histidine--tRNA ligase (Streptococcus pyogenes serotype M49 (strain NZ131)).